The following is a 394-amino-acid chain: Elongation factor Tu (394 aa).

The tr-type G domain maps to 10–204 (KPHINVGTIG…FLDSYIPEPK (195 aa)). Residues 19–26 (GHVDHGKT) form a G1 region. GTP is bound at residue 19-26 (GHVDHGKT). Position 26 (threonine 26) interacts with Mg(2+). The interval 60-64 (GITIN) is G2. Residues 81–84 (DCPG) form a G3 region. Residues 81–85 (DCPGH) and 136–139 (NKCD) each bind GTP. Residues 136-139 (NKCD) are G4. Residues 174 to 176 (SAL) are G5.

Belongs to the TRAFAC class translation factor GTPase superfamily. Classic translation factor GTPase family. EF-Tu/EF-1A subfamily. As to quaternary structure, monomer.

It is found in the cytoplasm. It carries out the reaction GTP + H2O = GDP + phosphate + H(+). Functionally, GTP hydrolase that promotes the GTP-dependent binding of aminoacyl-tRNA to the A-site of ribosomes during protein biosynthesis. The polypeptide is Elongation factor Tu (Buchnera aphidicola subsp. Acyrthosiphon pisum (strain 5A)).